Consider the following 283-residue polypeptide: Probable endonuclease 4 (283 aa).

Positions 69, 109, 145, 179, 182, 216, 229, 231, and 261 each coordinate Zn(2+).

It belongs to the AP endonuclease 2 family. The cofactor is Zn(2+).

It carries out the reaction Endonucleolytic cleavage to 5'-phosphooligonucleotide end-products.. Functionally, endonuclease IV plays a role in DNA repair. It cleaves phosphodiester bonds at apurinic or apyrimidinic (AP) sites, generating a 3'-hydroxyl group and a 5'-terminal sugar phosphate. This chain is Probable endonuclease 4, found in Campylobacter concisus (strain 13826).